Here is a 597-residue protein sequence, read N- to C-terminus: C4b-binding protein alpha chain (597 aa).

Residues Met1–Gly48 form the signal peptide. Sushi domains are found at residues Asn49–Tyr110, Lys111–Ile172, Val173–Lys236, Ile237–Pro296, Asn297–Ala362, Leu363–Asp424, Ile425–Ala482, and Leu483–Trp540. 16 cysteine pairs are disulfide-bonded: Cys50–Cys96, Cys81–Cys108, Cys113–Cys154, Cys140–Cys170, Cys175–Cys217, Cys203–Cys234, Cys239–Cys281, Cys267–Cys294, Cys299–Cys348, Cys332–Cys360, Cys365–Cys409, Cys399–Cys422, Cys426–Cys468, Cys454–Cys480, Cys484–Cys525, and Cys511–Cys538. Asn221 carries an N-linked (GlcNAc...) asparagine glycan. 2 N-linked (GlcNAc...) asparagine glycosylation sites follow: Asn506 and Asn528.

In terms of assembly, disulfide-linked complex of alpha and beta chains of 3 possible sorts: a 570 kDa complex of 7 alpha chains and 1 beta chain, a 530 kDa homoheptamer of alpha chains or a 500 kDa complex of 6 alpha chains and 1 beta chain. The central body of the alpha chain homomer supports tentacles, each with the binding site for C4b at the end. (Microbial infection) Interacts with Staphylococcus aureus protein SdrE; this interaction inhibits complement-mediated bacterial opsonization. In terms of tissue distribution, chylomicrons in the plasma.

The protein localises to the secreted. Controls the classical pathway of complement activation. It binds as a cofactor to C3b/C4b inactivator (C3bINA), which then hydrolyzes the complement fragment C4b. It also accelerates the degradation of the C4bC2a complex (C3 convertase) by dissociating the complement fragment C2a. Alpha chain binds C4b. It also interacts with anticoagulant protein S and with serum amyloid P component. This is C4b-binding protein alpha chain (C4BPA) from Homo sapiens (Human).